The following is a 282-amino-acid chain: Endonuclease V (282 aa).

Aspartate 52 and aspartate 126 together coordinate Mg(2+). A disordered region spans residues 250 to 282 (SLGLPGPPTPRSPKAQRPVACPKGDSGESSALC).

This sequence belongs to the endonuclease V family. In terms of assembly, monomer. Interacts with PABPC1; the interaction is RNA-dependent and stimulates ENDOV activity. The cofactor is Mg(2+).

Its subcellular location is the cytoplasm. The protein localises to the nucleus. It is found in the nucleolus. It localises to the stress granule. Its activity is regulated as follows. Inhibited by normal intracellular concentrations of ATP. Functionally, endoribonuclease that specifically cleaves inosine-containing RNAs: cleaves RNA at the second phosphodiester bond 3' to inosine. Active against both single-stranded and double-stranded RNAs. Has strong preference for single-stranded RNAs (ssRNAs) toward double-stranded RNAs (dsRNAs). Cleaves mRNAs and tRNAs containing inosine. Also able to cleave structure-specific dsRNA substrates containing the specific sites 5'-IIUI-3' and 5'-UIUU-3'. Inosine is present in a number of RNAs following editing; the function of inosine-specific endoribonuclease is still unclear: it could either play a regulatory role in edited RNAs, or be involved in antiviral response by removing the hyperedited long viral dsRNA genome that has undergone A-to-I editing. Binds branched DNA structures. In terms of biological role, endoribonuclease that specifically cleaves inosine-containing RNAs: cleaves RNA at the second phosphodiester bond 3' to inosine. Active against both single-stranded and double-stranded RNAs. Cleaves tRNAs containing inosine. This chain is Endonuclease V (ENDOV), found in Homo sapiens (Human).